Reading from the N-terminus, the 478-residue chain is Adenylosuccinate lyase (478 aa).

Substrate-binding positions include 14-15 (RY), 81-83 (KHD), and 107-108 (TS). The Proton donor/acceptor role is filled by His-155. Gln-237 serves as a coordination point for substrate. Ser-285 serves as the catalytic Proton donor/acceptor. 4 residues coordinate substrate: Arg-299, Arg-325, Ser-330, and Arg-334.

It belongs to the lyase 1 family. Adenylosuccinate lyase subfamily. As to quaternary structure, homotetramer. Residues from neighboring subunits contribute catalytic and substrate-binding residues to each active site.

The catalysed reaction is N(6)-(1,2-dicarboxyethyl)-AMP = fumarate + AMP. The enzyme catalyses (2S)-2-[5-amino-1-(5-phospho-beta-D-ribosyl)imidazole-4-carboxamido]succinate = 5-amino-1-(5-phospho-beta-D-ribosyl)imidazole-4-carboxamide + fumarate. Its pathway is purine metabolism; AMP biosynthesis via de novo pathway; AMP from IMP: step 2/2. It functions in the pathway purine metabolism; IMP biosynthesis via de novo pathway; 5-amino-1-(5-phospho-D-ribosyl)imidazole-4-carboxamide from 5-amino-1-(5-phospho-D-ribosyl)imidazole-4-carboxylate: step 2/2. Functionally, catalyzes two non-sequential steps in de novo AMP synthesis: converts (S)-2-(5-amino-1-(5-phospho-D-ribosyl)imidazole-4-carboxamido)succinate (SAICAR) to fumarate plus 5-amino-1-(5-phospho-D-ribosyl)imidazole-4-carboxamide, and thereby also contributes to de novo IMP synthesis, and converts succinyladenosine monophosphate (SAMP) to AMP and fumarate. This chain is Adenylosuccinate lyase, found in Caenorhabditis briggsae.